We begin with the raw amino-acid sequence, 196 residues long: UMP-CMP kinase (196 aa).

13-18 contacts ATP; sequence GAGKGT. A Phosphoserine modification is found at serine 33. The tract at residues 33–63 is NMP; that stretch reads SAGELLRDERKNPDSQYGELIEKYIKEGKIV. A ribonucleoside 5'-phosphate is bound at residue arginine 39. 2 positions are modified to N6-acetyllysine: lysine 43 and lysine 55. 61–63 lines the a ribonucleoside 5'-phosphate pocket; that stretch reads KIV. A Glycyl lysine isopeptide (Lys-Gly) (interchain with G-Cter in SUMO2) cross-link involves residue lysine 73. 93–96 contributes to the a ribonucleoside 5'-phosphate binding site; the sequence is GFPR. Asparagine 100 contacts CMP. The residue at position 106 (lysine 106) is an N6-succinyllysine. The tract at residues 133–143 is LID; it reads ERGKSSGRSDD. Residue arginine 134 participates in ATP binding. 2 residues coordinate a ribonucleoside 5'-phosphate: arginine 140 and arginine 151. ATP is bound at residue lysine 179. The residue at position 180 (serine 180) is a Phosphoserine.

The protein belongs to the adenylate kinase family. UMP-CMP kinase subfamily. As to quaternary structure, monomer. It depends on Mg(2+) as a cofactor. In terms of tissue distribution, ubiquitously expressed.

Its subcellular location is the nucleus. It is found in the cytoplasm. It carries out the reaction CMP + ATP = CDP + ADP. The catalysed reaction is dCMP + ATP = dCDP + ADP. The enzyme catalyses UMP + ATP = UDP + ADP. It catalyses the reaction a 2'-deoxyribonucleoside 5'-diphosphate + ATP = a 2'-deoxyribonucleoside 5'-triphosphate + ADP. It carries out the reaction a ribonucleoside 5'-diphosphate + ATP = a ribonucleoside 5'-triphosphate + ADP. Catalyzes the phosphorylation of pyrimidine nucleoside monophosphates at the expense of ATP. Plays an important role in de novo pyrimidine nucleotide biosynthesis. Has preference for UMP and CMP as phosphate acceptors. Also displays broad nucleoside diphosphate kinase activity. The polypeptide is UMP-CMP kinase (Homo sapiens (Human)).